We begin with the raw amino-acid sequence, 405 residues long: S-adenosylmethionine synthase (405 aa).

H19 contacts ATP. D21 serves as a coordination point for Mg(2+). K(+) is bound at residue E47. Residues E60 and Q103 each coordinate L-methionine. The flexible loop stretch occupies residues 103–113; the sequence is QSADIAQGVDK. ATP is bound by residues 179 to 181, 246 to 247, D255, 261 to 262, A278, and K282; these read DGK, RF, and RK. D255 contributes to the L-methionine binding site. K286 contacts L-methionine.

It belongs to the AdoMet synthase family. Homotetramer; dimer of dimers. Requires Mg(2+) as cofactor. It depends on K(+) as a cofactor.

The protein localises to the cytoplasm. It catalyses the reaction L-methionine + ATP + H2O = S-adenosyl-L-methionine + phosphate + diphosphate. It participates in amino-acid biosynthesis; S-adenosyl-L-methionine biosynthesis; S-adenosyl-L-methionine from L-methionine: step 1/1. Catalyzes the formation of S-adenosylmethionine (AdoMet) from methionine and ATP. The overall synthetic reaction is composed of two sequential steps, AdoMet formation and the subsequent tripolyphosphate hydrolysis which occurs prior to release of AdoMet from the enzyme. This chain is S-adenosylmethionine synthase, found in Shouchella clausii (strain KSM-K16) (Alkalihalobacillus clausii).